Reading from the N-terminus, the 298-residue chain is Oligodendrocyte transcription factor 2 (298 aa).

Over residues 1–13 (MDSDASLVSSRPS) the composition is skewed to polar residues. Disordered stretches follow at residues 1-60 (MDSD…SAEL) and 79-102 (SSSS…MTEP). Over residues 26–41 (NKGGGGGGGGGGGFTG) the composition is skewed to gly residues. Positions 79–91 (SSSSSASSASSAS) are enriched in low complexity. A bHLH domain is found at 106–160 (QLRLKINSRERKRMHDLNIAMDGLREVMPYAHGPSVRKLSKIATLLLARNYILML).

The protein resides in the nucleus. Functionally, required for oligodendrocyte and motor neuron specification in the spinal cord. The polypeptide is Oligodendrocyte transcription factor 2 (OLIG2) (Gallus gallus (Chicken)).